The chain runs to 484 residues: UDP-N-acetylmuramoyl-L-alanyl-D-glutamate--2,6-diaminopimelate ligase (484 aa).

UDP-N-acetyl-alpha-D-muramoyl-L-alanyl-D-glutamate is bound at residue Ser30. 111–117 (GTNGKTT) contributes to the ATP binding site. Residues 153–154 (TT), Ser180, Gln186, and Arg188 each bind UDP-N-acetyl-alpha-D-muramoyl-L-alanyl-D-glutamate. Lys220 bears the N6-carboxylysine mark. Residues Arg378, 402–405 (DNPR), Gly455, and Glu459 each bind meso-2,6-diaminopimelate. The short motif at 402 to 405 (DNPR) is the Meso-diaminopimelate recognition motif element.

It belongs to the MurCDEF family. MurE subfamily. It depends on Mg(2+) as a cofactor. In terms of processing, carboxylation is probably crucial for Mg(2+) binding and, consequently, for the gamma-phosphate positioning of ATP.

The protein resides in the cytoplasm. The enzyme catalyses UDP-N-acetyl-alpha-D-muramoyl-L-alanyl-D-glutamate + meso-2,6-diaminopimelate + ATP = UDP-N-acetyl-alpha-D-muramoyl-L-alanyl-gamma-D-glutamyl-meso-2,6-diaminopimelate + ADP + phosphate + H(+). Its pathway is cell wall biogenesis; peptidoglycan biosynthesis. Catalyzes the addition of meso-diaminopimelic acid to the nucleotide precursor UDP-N-acetylmuramoyl-L-alanyl-D-glutamate (UMAG) in the biosynthesis of bacterial cell-wall peptidoglycan. In Phocaeicola vulgatus (strain ATCC 8482 / DSM 1447 / JCM 5826 / CCUG 4940 / NBRC 14291 / NCTC 11154) (Bacteroides vulgatus), this protein is UDP-N-acetylmuramoyl-L-alanyl-D-glutamate--2,6-diaminopimelate ligase.